The following is a 350-amino-acid chain: Ion-translocating oxidoreductase complex subunit D (350 aa).

The next 4 helical transmembrane spans lie at 36 to 56, 68 to 88, 89 to 109, and 120 to 140; these read FYFFGWGVLVQVMLAITIALL, PIISTLSDNSAVLTALLIGVS, IPSIAPWWVVVVGTIFAIVIV, and IFNPAMAAYVMLLISFPVQMT. Thr-185 carries the FMN phosphoryl threonine modification. The next 5 helical transmembrane spans lie at 212-232, 239-259, 265-285, 291-311, and 315-335; these read GFGVGWFWVNVAYLVGGLAML, WQISVGILAALFVCSSFGYLL, IGPLFQLFSGATMLAVFFIAT, ATSVRGRLLFGGLIGVLVYVI, and GGYPDAFAFAILLANLCAPFI.

This sequence belongs to the NqrB/RnfD family. The complex is composed of six subunits: RnfA, RnfB, RnfC, RnfD, RnfE and RnfG. FMN is required as a cofactor.

It is found in the cell inner membrane. In terms of biological role, part of a membrane-bound complex that couples electron transfer with translocation of ions across the membrane. This is Ion-translocating oxidoreductase complex subunit D from Shewanella piezotolerans (strain WP3 / JCM 13877).